A 492-amino-acid polypeptide reads, in one-letter code: Aspartyl/glutamyl-tRNA(Asn/Gln) amidotransferase subunit B (492 aa).

The protein belongs to the GatB/GatE family. GatB subfamily. As to quaternary structure, heterotrimer of A, B and C subunits.

The enzyme catalyses L-glutamyl-tRNA(Gln) + L-glutamine + ATP + H2O = L-glutaminyl-tRNA(Gln) + L-glutamate + ADP + phosphate + H(+). It catalyses the reaction L-aspartyl-tRNA(Asn) + L-glutamine + ATP + H2O = L-asparaginyl-tRNA(Asn) + L-glutamate + ADP + phosphate + 2 H(+). In terms of biological role, allows the formation of correctly charged Asn-tRNA(Asn) or Gln-tRNA(Gln) through the transamidation of misacylated Asp-tRNA(Asn) or Glu-tRNA(Gln) in organisms which lack either or both of asparaginyl-tRNA or glutaminyl-tRNA synthetases. The reaction takes place in the presence of glutamine and ATP through an activated phospho-Asp-tRNA(Asn) or phospho-Glu-tRNA(Gln). This Pelagibacter ubique (strain HTCC1062) protein is Aspartyl/glutamyl-tRNA(Asn/Gln) amidotransferase subunit B.